The primary structure comprises 130 residues: Large ribosomal subunit protein bL19 (130 aa).

The protein belongs to the bacterial ribosomal protein bL19 family.

Its function is as follows. This protein is located at the 30S-50S ribosomal subunit interface and may play a role in the structure and function of the aminoacyl-tRNA binding site. The protein is Large ribosomal subunit protein bL19 of Burkholderia ambifaria (strain ATCC BAA-244 / DSM 16087 / CCUG 44356 / LMG 19182 / AMMD) (Burkholderia cepacia (strain AMMD)).